Reading from the N-terminus, the 61-residue chain is Metallothionein-1M (61 aa).

A beta region spans residues 1 to 29; that stretch reads MDPNCSCTTGVSCACTGSCTCKECKCTSC. A divalent metal cation-binding residues include cysteine 5, cysteine 7, cysteine 13, cysteine 15, cysteine 19, cysteine 21, cysteine 24, cysteine 26, cysteine 29, cysteine 33, cysteine 34, cysteine 36, cysteine 37, cysteine 41, cysteine 44, cysteine 48, cysteine 50, cysteine 57, cysteine 59, and cysteine 60. The interval 30 to 61 is alpha; it reads KKSCCSCCPVGCAKCAHGCVCKGTLENCSCCA.

Belongs to the metallothionein superfamily. Type 1 family. Monomer.

Functionally, metallothioneins have a high content of cysteine residues that bind various heavy metals; these proteins are transcriptionally regulated by both heavy metals and glucocorticoids. The protein is Metallothionein-1M (MT1M) of Homo sapiens (Human).